We begin with the raw amino-acid sequence, 88 residues long: Small ribosomal subunit protein uS15 (88 aa).

The protein belongs to the universal ribosomal protein uS15 family. As to quaternary structure, part of the 30S ribosomal subunit. Forms a bridge to the 50S subunit in the 70S ribosome, contacting the 23S rRNA.

Its function is as follows. One of the primary rRNA binding proteins, it binds directly to 16S rRNA where it helps nucleate assembly of the platform of the 30S subunit by binding and bridging several RNA helices of the 16S rRNA. Forms an intersubunit bridge (bridge B4) with the 23S rRNA of the 50S subunit in the ribosome. The chain is Small ribosomal subunit protein uS15 from Halothermothrix orenii (strain H 168 / OCM 544 / DSM 9562).